The primary structure comprises 267 residues: PF03932 family protein CutC (267 aa).

It belongs to the CutC family.

It localises to the cytoplasm. This Xylella fastidiosa (strain 9a5c) protein is PF03932 family protein CutC.